Reading from the N-terminus, the 45-residue chain is Parabutoporin (45 aa).

In terms of assembly, monomer and homodimer. Expressed by the venom gland.

It is found in the secreted. The protein resides in the target cell membrane. In terms of biological role, at high concentrations, acts as a pore former in cellular membranes and causes the leakage of the cells. At submicromolar concentrations, degranulates granulocytes and has a weak hemolytic activity against human red blood cells. Also strongly inhibits the production of superoxide anions. Has a strong antibacterial activity against Gram-negative bacteria but is less active against Gram-positive bacteria. Also has antifungal activity. Induces reversible G-protein dependent Ca(2+) release from intracellular stores and increase Ca(2+) influx in HL-60 cells. Induces the activation of the Rac pathway in granulocytes. Synergistically enhances the excitatory effects of short and long chain ion-channel-specific neurotoxins by interaction with the neuronal membranes. This chain is Parabutoporin, found in Parabuthus schlechteri (Scorpion).